We begin with the raw amino-acid sequence, 164 residues long: uncharacterized protein (164 aa).

This is an uncharacterized protein from Acanthamoeba polyphaga mimivirus (APMV).